Here is a 191-residue protein sequence, read N- to C-terminus: Small ribosomal subunit protein uS5 (191 aa).

The disordered stretch occupies residues 1–21 (MAAERERGGRERSREREERDS). In terms of domain architecture, S5 DRBM spans 23-86 (FVDKLVHINR…ESAKRNLTRV (64 aa)).

Part of the 30S ribosomal subunit. Contacts proteins S4 and S8.

Functionally, with S4 and S12 plays an important role in translational accuracy. In terms of biological role, located at the back of the 30S subunit body where it stabilizes the conformation of the head with respect to the body. The polypeptide is Small ribosomal subunit protein uS5 (Rhodopseudomonas palustris (strain ATCC BAA-98 / CGA009)).